A 126-amino-acid polypeptide reads, in one-letter code: RutC family protein SSO3206 (126 aa).

This sequence belongs to the RutC family.

This is RutC family protein SSO3206 from Saccharolobus solfataricus (strain ATCC 35092 / DSM 1617 / JCM 11322 / P2) (Sulfolobus solfataricus).